The following is a 1052-amino-acid chain: Lateral signaling target protein 2 homolog (1052 aa).

Disordered stretches follow at residues 311–348 (YSSI…TSPH), 379–455 (PSML…DSDS), 506–539 (DEFG…STSA), 551–678 (LRLP…ASSF), and 814–973 (NTID…IPDG). 3 stretches are compositionally biased toward low complexity: residues 312–346 (SSIE…STTS), 379–392 (PSML…TPTA), and 400–419 (PSHS…NPPA). The segment covering 422-455 (SEDDDDDDEEREDDEEECGMLDSDEQDLNDDSDS) has biased composition (acidic residues). Residues 554–574 (PSSSSENEQTTGSNQQSTIKT) are compositionally biased toward polar residues. Phosphoserine is present on residues S555 and S556. Basic residues-rich tracts occupy residues 588 to 614 (RQRH…HHQQ) and 625 to 644 (SHHH…ARKR). The segment covering 652 to 661 (STTAEQQQTI) has biased composition (polar residues). The span at 824-842 (NNNNNNNNNSGSSSSSNSS) shows a compositional bias: low complexity. S854 is subject to Phosphoserine. Residues 872 to 915 (QQQQQQQAQLQLQMQRQRNNSVGSNSPSSSSSSSSSSEHNSPIS) are compositionally biased toward low complexity. Over residues 926–935 (SNSASMPSIG) the composition is skewed to polar residues. A compositionally biased stretch (low complexity) spans 936-963 (STATTAAATAAATATTTTSATTTTTTTT). Residues 972 to 1032 (DGKAPRCMSC…VCRECYVREV (61 aa)) form an FYVE-type zinc finger. The Zn(2+) site is built by C978, C981, C994, C997, C1002, C1005, C1024, and C1027.

This sequence belongs to the lst-2 family.

Functionally, negative regulator of epidermal growth factor receptor (EGFR) signaling. The sequence is that of Lateral signaling target protein 2 homolog from Drosophila virilis (Fruit fly).